Here is a 260-residue protein sequence, read N- to C-terminus: Type II methyltransferase M1.MboII (260 aa).

S-adenosyl-L-methionine contacts are provided by residues Cys12, Asp30, Lys197, 223–225, and 241–242; these read SGT and DM.

It belongs to the N(4)/N(6)-methyltransferase family. At low concentration exists as a monomer and homodimer. Probably binds to DNA as a monomer.

It carries out the reaction a 2'-deoxyadenosine in DNA + S-adenosyl-L-methionine = an N(6)-methyl-2'-deoxyadenosine in DNA + S-adenosyl-L-homocysteine + H(+). Its function is as follows. A beta subtype methylase that recognizes the double-stranded sequence 5'-GAAGA-3', methylates A-5 on the top strand, and protects the DNA from cleavage by the MboII endonuclease. It is not known if the cytosine of the complementary sequence TCTTC is also methylated by this enzyme. The protein is Type II methyltransferase M1.MboII of Moraxella bovis.